A 484-amino-acid polypeptide reads, in one-letter code: MKVLFVVSECVPFVKTGGLADVAGALPKELKKLGTDVRVMLPKYGLIPQHMRQKMKKIAELVVRVGWRRQYCGIEQLEHEGITYYFVDNEYYFKRDSLYGHYDDGERFSYFCRAVLDCLPVIDFQPNVIHCHDWHTGMIPFLLREEYMRNSFYAQMKTVFTIHNLQFQGIFPREILGDLLNLSDRYFSIEHLEFYGHVSFMKGALVSAHLITTVSPTYKEEIQTPYYGERLDGLLRARSSHLVGILNGIDDEIYNPKKDPYIAVPYDVTTIARKSINKRALQQHFSLPSEEDVPVIAIVSRLTKQKGLDLVKCVFHEIIAEHVQMIILGTGEWEFEQFFQDMTMTYPDRVRVYIGFSEQLAHQIYAGADMFLMPSKFEPCGLGQMIAMRYGAVPIVRETGGLNDTVQSFNELTKEGTGFTFKNFNAHDMLYTIQRARSFYEQKEIWETIMKQAMSRDYSWAKSAFKYNQLYDELMAGSGIYVHE.

Lys-15 provides a ligand contact to ADP-alpha-D-glucose.

The protein belongs to the glycosyltransferase 1 family. Bacterial/plant glycogen synthase subfamily.

The enzyme catalyses [(1-&gt;4)-alpha-D-glucosyl](n) + ADP-alpha-D-glucose = [(1-&gt;4)-alpha-D-glucosyl](n+1) + ADP + H(+). Its pathway is glycan biosynthesis; glycogen biosynthesis. Synthesizes alpha-1,4-glucan chains using ADP-glucose. This is Glycogen synthase from Anoxybacillus flavithermus (strain DSM 21510 / WK1).